The primary structure comprises 947 residues: Ionotropic receptor 25a (947 aa).

A signal peptide spans 1–30 (MILMNPKTSKILWLLGFLSLLSSFSLEIAA). Over 31–562 (QTTQNINVLF…SLFKFLTVLE (532 aa)) the chain is Extracellular. N-linked (GlcNAc...) asparagine glycosylation is found at Asn-78, Asn-177, Asn-277, and Asn-434. Residues 563–583 (TNVWLCILAAYFFTSFLMWIF) traverse the membrane as a helical segment. At 584-641 (DRWSPYSYQNNREKYKDDEEKREFNLKECLWFCMTSLTPQGGGEAPKNLSGRLVAATW) the chain is on the cytoplasmic side. The helical transmembrane segment at 642–662 (WLFGFIIIASYTANLAAFLTV) threads the bilayer. The Extracellular portion of the chain corresponds to 663–858 (SRLDTPVESL…DQSDGISIQN (196 aa)). 3 N-linked (GlcNAc...) asparagine glycosylation sites follow: Asn-687, Asn-715, and Asn-762. Residues 859–879 (IGGVFIVIFVGIGMACITLVF) form a helical membrane-spanning segment. The Cytoplasmic portion of the chain corresponds to 880–947 (EYWWYRYRKN…QYPATFKPRF (68 aa)).

This sequence belongs to the glutamate-gated ion channel (TC 1.A.10.1) family. Interacts with nocte. In terms of tissue distribution, in the antenna, detected in neurons of the arista and also detected in sacculus neurons which innervate the first and second chambers (at protein level). Throughout the main body of the antenna, expressed in neurons which innervate the coeloconic class of olfactory sensilla (at protein level). Expressed in multiple cells of the dorsal organ including the dorsal organ cool cells (at protein level). Detected in femur and retina. Expressed in a subset of femur chordonotal neurons and antennal Johnston's Organ neurons.

The protein resides in the cell membrane. The protein localises to the cell projection. It localises to the axon. It is found in the dendrite. Its subcellular location is the perikaryon. The protein resides in the cilium. Functionally, integral part of various neural sensory systems in the antenna that provide the neural basis for the response to environmental changes in temperature (thermosensation), humidity (hygrosensation) and odor detection. Required for odor-evoked electrophysiological responses in multiple neuron classes in the antenna and is likely to function as part of an olfactory receptor complex with Ir76a and Ir76b. Together with Ir21a and Ir93a, mediates the response of the larval dorsal organ cool cells, a trio of cool-responsive neurons, to cooling and is required for cool avoidance behavior. Required in chordonotal organ neurons for behavioral synchronization to low-amplitude temperature cycles and mediates circadian clock resetting by temperature. Together with Ir40a and Ir93a, mediates the response of the hydrosensory sacculus neurons to changes in relative humidity, and is required for dry detection and humidiy preference behavior. The chain is Ionotropic receptor 25a from Drosophila melanogaster (Fruit fly).